We begin with the raw amino-acid sequence, 947 residues long: Netrin receptor unc-5 (947 aa).

Residues 43–141 (VIRNKPLRLQ…VHLAYMRKHF (99 aa)) form the Ig-like domain. Disulfide bonds link cysteine 53/cysteine 112, cysteine 160/cysteine 209, cysteine 243/cysteine 295, cysteine 247/cysteine 299, and cysteine 273/cysteine 285. The Ig-like C2-type domain maps to 139 to 226 (KHFLKSPVAQ…SRKTDPVEVQ (88 aa)). A glycan (N-linked (GlcNAc...) asparagine) is linked at asparagine 206. TSP type-1 domains follow at residues 230-300 (DGGW…VPCK) and 302-354 (DGGW…QLCT). Tryptophan 305 and tryptophan 308 each carry a C-linked (Man) tryptophan glycan. The chain crosses the membrane as a helical span at residues 369-389 (GSVASIFIVASFILAILAMFC). At 390-947 (CKRGNSKKSK…LSAFPQIVSP (558 aa)) the chain is on the cytoplasmic side. Tyrosine 510 is modified (phosphotyrosine). Positions 530–658 (NIVAAQIDSN…LNTNMFVQFE (129 aa)) constitute a ZU5 domain. The 82-residue stretch at 857–938 (ELARLLDMPN…DAVMVLERFL (82 aa)) folds into the Death domain.

Belongs to the unc-5 family. As to quaternary structure, interacts (via cytoplasmic domain) with src-1 (via SH2 domain and SH3 domain). Interacts with madd-4. Interacts with unc-129; the interaction is direct. Phosphorylated on different cytoplasmic tyrosine residues. May be phosphorylated on tyrosine residues by src-1. Tyrosine phosphorylation is unc-6-dependent. Post-translationally, glycosylated via C-mannosylation by dpy-19 at Trp-305 and Trp-308. In terms of tissue distribution, expressed in cell bodies and axons of the VNC motor neurons that extend axons to the dorsal midline and within the ventral nerve cord. Expressed in gonadal distal tip cells (DTC).

It localises to the cell membrane. The protein resides in the membrane raft. It is found in the cell projection. The protein localises to the neuron projection. Receptor for netrin (unc-6) required for axon guidance. Mediates axon repulsion of neuronal growth cones in the developing nervous system upon ligand binding. Axon migration is mediated by the secreted unc-6, which promotes attraction of neurons and axons through binding to the unc-40 receptor, while repulsion requires both unc-5 and unc-40 receptors. Involved in the ventral-dorsal and anterior-posterior migration of distal tip cells along the body, which may be mediated by Wnt receptor mom-5, ced-10/Rac, ced-12/ELMO and mig-2/RhoG. In Caenorhabditis elegans, this protein is Netrin receptor unc-5.